Reading from the N-terminus, the 516-residue chain is uncharacterized protein (516 aa).

Positions Met-1–Thr-17 are cleaved as a signal peptide. Disordered regions lie at residues Lys-29–Arg-197 and Arg-296–Leu-426. Basic and acidic residues predominate over residues Arg-71–Ser-85. Positions Val-122–Ser-144 are enriched in pro residues. Positions Pro-145–Val-155 are enriched in low complexity. The segment covering Lys-351–Pro-367 has biased composition (basic and acidic residues). Positions Ser-394–Pro-406 are enriched in low complexity. Over residues Ala-415–Leu-426 the composition is skewed to basic and acidic residues.

This is an uncharacterized protein from Treponema pallidum (strain Nichols).